The sequence spans 389 residues: Probable L-tyrosine/L-aspartate decarboxylase (389 aa).

Residue Lys-233 is modified to N6-(pyridoxal phosphate)lysine.

This sequence belongs to the group II decarboxylase family. MfnA subfamily. Pyridoxal 5'-phosphate serves as cofactor.

It catalyses the reaction L-tyrosine + H(+) = tyramine + CO2. The catalysed reaction is L-aspartate + H(+) = beta-alanine + CO2. It functions in the pathway cofactor biosynthesis; methanofuran biosynthesis. It participates in cofactor biosynthesis; coenzyme A biosynthesis. In terms of biological role, catalyzes the decarboxylation of L-tyrosine to produce tyramine for methanofuran biosynthesis. Can also catalyze the decarboxylation of L-aspartate to produce beta-alanine for coenzyme A (CoA) biosynthesis. This Methanosphaera stadtmanae (strain ATCC 43021 / DSM 3091 / JCM 11832 / MCB-3) protein is Probable L-tyrosine/L-aspartate decarboxylase.